The chain runs to 94 residues: Co-chaperonin GroES (94 aa).

Belongs to the GroES chaperonin family. Heptamer of 7 subunits arranged in a ring. Interacts with the chaperonin GroEL.

It localises to the cytoplasm. Its function is as follows. Together with the chaperonin GroEL, plays an essential role in assisting protein folding. The GroEL-GroES system forms a nano-cage that allows encapsulation of the non-native substrate proteins and provides a physical environment optimized to promote and accelerate protein folding. GroES binds to the apical surface of the GroEL ring, thereby capping the opening of the GroEL channel. The polypeptide is Co-chaperonin GroES (Halothermothrix orenii (strain H 168 / OCM 544 / DSM 9562)).